Consider the following 430-residue polypeptide: UDP-N-acetylglucosamine 1-carboxyvinyltransferase (430 aa).

K22–N23 is a phosphoenolpyruvate binding site. Residue R102 participates in UDP-N-acetyl-alpha-D-glucosamine binding. C126 serves as the catalytic Proton donor. At C126 the chain carries 2-(S-cysteinyl)pyruvic acid O-phosphothioketal. UDP-N-acetyl-alpha-D-glucosamine contacts are provided by residues R131–L135, K172–V175, D317, and I339.

The protein belongs to the EPSP synthase family. MurA subfamily.

Its subcellular location is the cytoplasm. It catalyses the reaction phosphoenolpyruvate + UDP-N-acetyl-alpha-D-glucosamine = UDP-N-acetyl-3-O-(1-carboxyvinyl)-alpha-D-glucosamine + phosphate. Its pathway is cell wall biogenesis; peptidoglycan biosynthesis. In terms of biological role, cell wall formation. Adds enolpyruvyl to UDP-N-acetylglucosamine. The sequence is that of UDP-N-acetylglucosamine 1-carboxyvinyltransferase from Rhizobium johnstonii (strain DSM 114642 / LMG 32736 / 3841) (Rhizobium leguminosarum bv. viciae).